The following is a 175-amino-acid chain: Transcriptional repressor NrdR (175 aa).

A zinc finger lies at 3–34 (CPICQDTNSRVLESRSAESGKSIRRRRECMNC). An ATP-cone domain is found at 49 to 139 (ITIIKRDGKK…VYRKFQGIRD (91 aa)).

It belongs to the NrdR family. Zn(2+) is required as a cofactor.

Its function is as follows. Negatively regulates transcription of bacterial ribonucleotide reductase nrd genes and operons by binding to NrdR-boxes. This Trichodesmium erythraeum (strain IMS101) protein is Transcriptional repressor NrdR.